The primary structure comprises 128 residues: Small ribosomal subunit protein uS9 (128 aa).

Positions 97–113 (RSEGFMTRDSRSVERKK) are enriched in basic and acidic residues. The tract at residues 97–128 (RSEGFMTRDSRSVERKKPGQPKARRRFQFSKR) is disordered. Basic residues predominate over residues 114 to 128 (PGQPKARRRFQFSKR).

It belongs to the universal ribosomal protein uS9 family.

This is Small ribosomal subunit protein uS9 from Phocaeicola vulgatus (strain ATCC 8482 / DSM 1447 / JCM 5826 / CCUG 4940 / NBRC 14291 / NCTC 11154) (Bacteroides vulgatus).